The chain runs to 395 residues: Chorismate synthase (395 aa).

Arg40 and Arg46 together coordinate NADP(+). Residues 134–136, 256–257, Gly301, 316–320, and Arg342 contribute to the FMN site; these read RAS, QA, and KPIST.

The protein belongs to the chorismate synthase family. Homotetramer. FMNH2 is required as a cofactor.

The catalysed reaction is 5-O-(1-carboxyvinyl)-3-phosphoshikimate = chorismate + phosphate. The protein operates within metabolic intermediate biosynthesis; chorismate biosynthesis; chorismate from D-erythrose 4-phosphate and phosphoenolpyruvate: step 7/7. Catalyzes the anti-1,4-elimination of the C-3 phosphate and the C-6 proR hydrogen from 5-enolpyruvylshikimate-3-phosphate (EPSP) to yield chorismate, which is the branch point compound that serves as the starting substrate for the three terminal pathways of aromatic amino acid biosynthesis. This reaction introduces a second double bond into the aromatic ring system. This chain is Chorismate synthase, found in Beutenbergia cavernae (strain ATCC BAA-8 / DSM 12333 / CCUG 43141 / JCM 11478 / NBRC 16432 / NCIMB 13614 / HKI 0122).